We begin with the raw amino-acid sequence, 290 residues long: Zinc-finger homeodomain protein 2 (290 aa).

The segment covering 1-15 has biased composition (acidic residues); it reads MDFDDHDEGDGDEEM. A disordered region spans residues 1-59; sequence MDFDDHDEGDGDEEMPPMPLSSGYDAPMQPGLGGGGGGVPKPGGGVGGGGGGGGGGGGG. Positions 31-59 are enriched in gly residues; sequence GLGGGGGGVPKPGGGVGGGGGGGGGGGGG. The segment at 63–112 adopts a ZF-HD dimerization-type; degenerate zinc-finger fold; sequence YRECLKNHAVGIGGHAVDGCGEFMASGEEGSIDALRCAACGCHRNFHRKE. Positions 226 to 289 form a DNA-binding region, homeobox; the sequence is KKRFRTKFTQ…NNKHTLGKKA (64 aa).

Homo- and heterodimer with other ZFHD proteins.

It is found in the nucleus. Putative transcription factor. The chain is Zinc-finger homeodomain protein 2 (ZHD2) from Oryza sativa subsp. japonica (Rice).